Reading from the N-terminus, the 350-residue chain is Chorismate synthase (350 aa).

Arg39 and Arg45 together coordinate NADP(+). The interval 85 to 104 is disordered; it reads KDKKVPPVTRPRPGHADLPG. Residues 119 to 121, 213 to 214, Gly258, 273 to 277, and Arg299 contribute to the FMN site; these read RAS, QG, and KPIPT.

Belongs to the chorismate synthase family. In terms of assembly, homotetramer. It depends on FMNH2 as a cofactor.

It catalyses the reaction 5-O-(1-carboxyvinyl)-3-phosphoshikimate = chorismate + phosphate. The protein operates within metabolic intermediate biosynthesis; chorismate biosynthesis; chorismate from D-erythrose 4-phosphate and phosphoenolpyruvate: step 7/7. Its function is as follows. Catalyzes the anti-1,4-elimination of the C-3 phosphate and the C-6 proR hydrogen from 5-enolpyruvylshikimate-3-phosphate (EPSP) to yield chorismate, which is the branch point compound that serves as the starting substrate for the three terminal pathways of aromatic amino acid biosynthesis. This reaction introduces a second double bond into the aromatic ring system. The sequence is that of Chorismate synthase from Caldanaerobacter subterraneus subsp. tengcongensis (strain DSM 15242 / JCM 11007 / NBRC 100824 / MB4) (Thermoanaerobacter tengcongensis).